The chain runs to 737 residues: Autophagy-related protein 22 (737 aa).

The tract at residues 115–154 (RMSPANAGDNSDSYPYGDDTDGDSSSGLPPPRYPGDDTRP) is disordered. Residues 125–141 (SDSYPYGDDTDGDSSSG) show a composition bias toward low complexity. 4 helical membrane-spanning segments follow: residues 166-186 (YAFA…PILL), 232-252 (SFAM…VVSI), 264-284 (KLLL…IFIS), and 289-309 (LIGA…FVLL). The tract at residues 327 to 353 (GDYGSPGYATTEEGDDEDDEYQEDSTR) is disordered. A compositionally biased stretch (acidic residues) spans 338-349 (EEGDDEDDEYQE). Asparagine 354 carries N-linked (GlcNAc...) asparagine glycosylation. A helical membrane pass occupies residues 395–415 (GIGIGYIAGLFLQCVAIAILI). The N-linked (GlcNAc...) asparagine glycan is linked to asparagine 419. A run of 7 helical transmembrane segments spans residues 426–446 (IVLC…AMWL), 487–507 (LVDI…IATT), 524–544 (WALG…AFSW), 559–579 (ILAC…GYLP), 593–613 (WEMY…SGYC), 632–652 (LYAI…GAII), and 661–681 (AFWF…FINV).

The protein belongs to the ATG22 family.

The protein localises to the vacuole membrane. Functionally, vacuolar effluxer which mediate the efflux of amino acids resulting from autophagic degradation. The release of autophagic amino acids allows the maintenance of protein synthesis and viability during nitrogen starvation. In Neurospora crassa (strain ATCC 24698 / 74-OR23-1A / CBS 708.71 / DSM 1257 / FGSC 987), this protein is Autophagy-related protein 22 (apg-11).